The following is a 427-amino-acid chain: Gamma-glutamyl phosphate reductase (427 aa).

Belongs to the gamma-glutamyl phosphate reductase family.

The protein resides in the cytoplasm. It catalyses the reaction L-glutamate 5-semialdehyde + phosphate + NADP(+) = L-glutamyl 5-phosphate + NADPH + H(+). The protein operates within amino-acid biosynthesis; L-proline biosynthesis; L-glutamate 5-semialdehyde from L-glutamate: step 2/2. Catalyzes the NADPH-dependent reduction of L-glutamate 5-phosphate into L-glutamate 5-semialdehyde and phosphate. The product spontaneously undergoes cyclization to form 1-pyrroline-5-carboxylate. In Anaeromyxobacter sp. (strain K), this protein is Gamma-glutamyl phosphate reductase.